The following is a 416-amino-acid chain: Adenylosuccinate synthetase (416 aa).

Residues Gly13–Lys19 and Gly41–Thr43 contribute to the GTP site. Asp14 serves as the catalytic Proton acceptor. The Mg(2+) site is built by Asp14 and Gly41. IMP is bound by residues Asp14–Lys17, Asn39–His42, Thr126, Arg140, Gln220, Thr235, and Arg299. The active-site Proton donor is His42. Val295–Arg301 is a binding site for substrate. Residues Arg301, Lys327–Asp329, and Ser405–Ser407 each bind GTP.

This sequence belongs to the adenylosuccinate synthetase family. Homodimer. It depends on Mg(2+) as a cofactor.

The protein localises to the cytoplasm. The catalysed reaction is IMP + L-aspartate + GTP = N(6)-(1,2-dicarboxyethyl)-AMP + GDP + phosphate + 2 H(+). The protein operates within purine metabolism; AMP biosynthesis via de novo pathway; AMP from IMP: step 1/2. Its function is as follows. Plays an important role in the de novo pathway of purine nucleotide biosynthesis. Catalyzes the first committed step in the biosynthesis of AMP from IMP. The sequence is that of Adenylosuccinate synthetase from Campylobacter jejuni subsp. jejuni serotype O:2 (strain ATCC 700819 / NCTC 11168).